We begin with the raw amino-acid sequence, 519 residues long: Major facilitator superfamily domain-containing protein 8 (519 aa).

Residues 1–25 (MANLGSEAEREPLLGPGSPGSREWS) form a disordered region. The Cytoplasmic segment spans residues 1–41 (MANLGSEAEREPLLGPGSPGSREWSEIETQEHYKSRWKSVR). A Dileucine internalization motif motif is present at residues 13–14 (LL). A helical membrane pass occupies residues 42 to 62 (ILYLTMFLSSVGFSIVIMSIW). Residues 63–75 (PYLQKIDQTADAS) lie on the Extracellular side of the membrane. The chain crosses the membrane as a helical span at residues 76–96 (FLGWVIASYSLGQMVASPLFG). Residues 97–106 (LWSNYRPRKE) lie on the Cytoplasmic side of the membrane. A helical membrane pass occupies residues 107 to 127 (PLIVSISISVAANCLYAYVHV). The Extracellular segment spans residues 128 to 140 (PAAHNKYYMLIAR). Residues 141-161 (GLVGFGAGNVAVVRSYIAGAT) traverse the membrane as a helical segment. At 162–174 (SLQERTNAMANTS) the chain is on the cytoplasmic side. The helical transmembrane segment at 175-195 (TCQALGFILGPVFQTCFALIG) threads the bilayer. At 196–212 (EKGVTWDIIKLQVNMYT) the chain is on the extracellular side. The chain crosses the membrane as a helical span at residues 213–233 (APVLLAAFLGILNIILILFIL). Residues 234–267 (REHRVDDLGRQCKSVNFQEENTDEPQIPEGSIDQ) lie on the Cytoplasmic side of the membrane. Residues 268–288 (VAVVATNIVFFVVLFIFAVYE) form a helical membrane-spanning segment. Residues 289 to 310 (TILTPLTLDMYAWTQEQAVLYD) are Extracellular-facing. A helical membrane pass occupies residues 311–331 (GILLVAFGVEAVLVFMGVKLL). Residues 332–338 (SKKIGER) are Cytoplasmic-facing. The chain crosses the membrane as a helical span at residues 339–359 (AILLGGFVVVWVGFFILLPWG). Topologically, residues 360 to 416 (NQFPKIQWEDLHNSSTPNTTFGEIIIGLWNSSREDHSEQPTGCPIEQTWCLYTPVIH) are extracellular. Asparagine 372 and asparagine 377 each carry an N-linked (GlcNAc...) asparagine glycan. The chain crosses the membrane as a helical span at residues 417–439 (LAQFLTAAVLIGTGYPACSVMSY). Topologically, residues 440–452 (TLYSKVLGPKPQG) are cytoplasmic. Residues 453-473 (IYMGWLTTSGSAARILGPVFI) traverse the membrane as a helical segment. At 474 to 483 (SHVYTYLGPR) the chain is on the extracellular side. A helical membrane pass occupies residues 484–504 (WAFSLVCGIVVLTILLIGAVY). Residues 505–519 (KRLVAFSVRYMRIQE) lie on the Cytoplasmic side of the membrane.

It belongs to the major facilitator superfamily.

Its subcellular location is the endosome membrane. The protein resides in the lysosome membrane. The catalysed reaction is chloride(in) = chloride(out). It catalyses the reaction iodide(out) = iodide(in). The enzyme catalyses fluoride(in) = fluoride(out). Outward-rectifying chloride channel involved in endolysosomal chloride homeostasis, membrane fusion and function. Conducts chloride currents up to hundreds of picoamperes. Regulates lysosomal calcium content by reducing the lysosomal membrane potential, thereby activating TRPML1 channel and further release of lysosomal calcium ions. Regulates the pH in endolysosomal compartments and may contribute to progressive acidification from endosome to lysosome. Permeable to other halides such as iodide and fluoride ions. The protein is Major facilitator superfamily domain-containing protein 8 of Mus musculus (Mouse).